Consider the following 452-residue polypeptide: Gastrin/cholecystokinin type B receptor (452 aa).

At 1–55 (MELVKLNRSVQGSGPVASLCRPGGPLLNNSGTGNLSCEPPRIRGAGTRELELAIR) the chain is on the extracellular side. Asparagine 7, asparagine 28, and asparagine 34 each carry an N-linked (GlcNAc...) asparagine glycan. A helical transmembrane segment spans residues 56 to 77 (VTLYAVIFLMSVGGNILIIVVL). Residues 78–85 (GLSRRLRT) are Cytoplasmic-facing. Residues 86 to 107 (VTNAFLLSLAVSDLLLAVACMP) traverse the membrane as a helical segment. Over 108–129 (FTLLPNLMGTFIFGTVICKAVS) the chain is Extracellular. A disulfide bridge links cysteine 125 with cysteine 203. The chain crosses the membrane as a helical span at residues 130-148 (YLMGVSVSVSTLSLVAIAL). Residues 149 to 168 (ERYSAICRPLQARVWQTRSH) are Cytoplasmic-facing. The helical transmembrane segment at 169–187 (AARVILATWLLSGLLMVPY) threads the bilayer. Over 188–217 (PVYTAVQPVGPRVLQCVHRWPSARVRQTWS) the chain is Extracellular. The helical transmembrane segment at 218-240 (VLLLLLLFFVPGVVMAVAYGLIS) threads the bilayer. Residues 241-338 (RELYLGLRFD…KLLAKKRVVR (98 aa)) are Cytoplasmic-facing. The segment at 255–285 (SESQSRVRGQGGLPGGAAPGPVHQNGRCRPE) is disordered. Gly residues predominate over residues 263–272 (GQGGLPGGAA). The chain crosses the membrane as a helical span at residues 339–360 (MLLVIVVLFFMCWLPVYSANTW). Residues 361–378 (RAFDGPGAHRALSGAPIS) are Extracellular-facing. Residues 379-399 (FIHLLSYASACVNPLVYCFMH) traverse the membrane as a helical segment. Over 400–452 (RRFRQACLDTCARCCPRPPRARPRPLPDEDPPTPSIASLSRLSYTTISTLGPG) the chain is Cytoplasmic. Residue cysteine 413 is the site of S-palmitoyl cysteine attachment.

The protein belongs to the G-protein coupled receptor 1 family.

The protein resides in the cell membrane. Functionally, receptor for gastrin and cholecystokinin. The CCK-B receptors occur throughout the central nervous system where they modulate anxiety, analgesia, arousal, and neuroleptic activity. This receptor mediates its action by association with G proteins that activate a phosphatidylinositol-calcium second messenger system. This Oryctolagus cuniculus (Rabbit) protein is Gastrin/cholecystokinin type B receptor (CCKBR).